The sequence spans 558 residues: Probable beta-glucosidase btgE (558 aa).

An N-terminal signal peptide occupies residues Met-1–Ala-18. 2 disordered regions span residues Ser-64–Pro-105 and Leu-251–Met-305. 2 stretches are compositionally biased toward low complexity: residues Pro-76–Pro-105 and Pro-252–Ala-292. Positions Glu-293–Met-305 are enriched in polar residues. Catalysis depends on Glu-399, which acts as the Proton donor. Glu-495 serves as the catalytic Nucleophile.

The protein belongs to the glycosyl hydrolase 17 family.

It is found in the secreted. The protein resides in the cell wall. The enzyme catalyses Hydrolysis of terminal, non-reducing beta-D-glucosyl residues with release of beta-D-glucose.. It participates in glycan metabolism; cellulose degradation. Functionally, beta-glucosidases are one of a number of cellulolytic enzymes involved in the degradation of cellulosic biomass. Catalyzes the last step releasing glucose from the inhibitory cellobiose. This Aspergillus terreus (strain NIH 2624 / FGSC A1156) protein is Probable beta-glucosidase btgE (btgE).